The sequence spans 709 residues: Polyribonucleotide nucleotidyltransferase (709 aa).

Residues aspartate 490 and aspartate 496 each coordinate Mg(2+). A KH domain is found at proline 557–isoleucine 616. Residues glycine 626–lysine 694 form the S1 motif domain.

It belongs to the polyribonucleotide nucleotidyltransferase family. The cofactor is Mg(2+).

It is found in the cytoplasm. It carries out the reaction RNA(n+1) + phosphate = RNA(n) + a ribonucleoside 5'-diphosphate. Its function is as follows. Involved in mRNA degradation. Catalyzes the phosphorolysis of single-stranded polyribonucleotides processively in the 3'- to 5'-direction. The sequence is that of Polyribonucleotide nucleotidyltransferase from Persephonella marina (strain DSM 14350 / EX-H1).